A 726-amino-acid chain; its full sequence is ATP-dependent permease MDL1, mitochondrial (726 aa).

The N-terminal 112 residues, 1–112 (MDPIRFGLSR…LAFLKLCVRH (112 aa)), are a transit peptide targeting the mitochondrion. Residues asparagine 66, asparagine 113, and asparagine 132 are each glycosylated (N-linked (GlcNAc...) asparagine). 5 helical membrane-spanning segments follow: residues 158-178 (FFIA…IPYI), 196-216 (IMGI…FLGS), 306-326 (GYMS…GEYV), 386-406 (GIFF…ILAL), and 423-443 (SFLL…GCFT). Residues 158-447 (FFIAGSLLLV…LSGCFTDIMK (290 aa)) form the ABC transmembrane type-1 domain. In terms of domain architecture, ABC transporter spans 482-719 (LSFRNVGFAY…GTNFYKLMRW (238 aa)). Asparagine 502 carries N-linked (GlcNAc...) asparagine glycosylation. 517 to 524 (APSGGGKS) is an ATP binding site. 3 N-linked (GlcNAc...) asparagine glycosylation sites follow: asparagine 584, asparagine 598, and asparagine 668.

This sequence belongs to the ABC transporter superfamily. ABCB family. Mitochondrial peptide exporter (TC 3.A.1.212) subfamily.

Its subcellular location is the mitochondrion inner membrane. Mediates export of peptides generated upon proteolysis of mitochondrial inner membrane proteins. The sequence is that of ATP-dependent permease MDL1, mitochondrial (mdl1) from Schizosaccharomyces pombe (strain 972 / ATCC 24843) (Fission yeast).